The chain runs to 418 residues: Light-independent protochlorophyllide reductase subunit N (418 aa).

3 residues coordinate [4Fe-4S] cluster: C17, C42, and C103.

This sequence belongs to the BchN/ChlN family. Protochlorophyllide reductase is composed of three subunits; ChlL, ChlN and ChlB. Forms a heterotetramer of two ChlB and two ChlN subunits. The cofactor is [4Fe-4S] cluster.

The enzyme catalyses chlorophyllide a + oxidized 2[4Fe-4S]-[ferredoxin] + 2 ADP + 2 phosphate = protochlorophyllide a + reduced 2[4Fe-4S]-[ferredoxin] + 2 ATP + 2 H2O. The protein operates within porphyrin-containing compound metabolism; chlorophyll biosynthesis (light-independent). Functionally, component of the dark-operative protochlorophyllide reductase (DPOR) that uses Mg-ATP and reduced ferredoxin to reduce ring D of protochlorophyllide (Pchlide) to form chlorophyllide a (Chlide). This reaction is light-independent. The NB-protein (ChlN-ChlB) is the catalytic component of the complex. The chain is Light-independent protochlorophyllide reductase subunit N from Prochlorococcus marinus (strain NATL2A).